Here is a 240-residue protein sequence, read N- to C-terminus: Purine nucleoside phosphorylase RP494 (240 aa).

Residues His60, Cys96, and His113 each coordinate Zn(2+).

The protein belongs to the purine nucleoside phosphorylase YfiH/LACC1 family. Homodimer. It depends on Cu(2+) as a cofactor. Zn(2+) is required as a cofactor.

It catalyses the reaction adenosine + phosphate = alpha-D-ribose 1-phosphate + adenine. The enzyme catalyses S-methyl-5'-thioadenosine + phosphate = 5-(methylsulfanyl)-alpha-D-ribose 1-phosphate + adenine. It carries out the reaction inosine + phosphate = alpha-D-ribose 1-phosphate + hypoxanthine. The catalysed reaction is adenosine + H2O + H(+) = inosine + NH4(+). Purine nucleoside enzyme that catalyzes the phosphorolysis of adenosine and inosine nucleosides, yielding D-ribose 1-phosphate and the respective free bases, adenine and hypoxanthine. Also catalyzes the phosphorolysis of S-methyl-5'-thioadenosine into adenine and S-methyl-5-thio-alpha-D-ribose 1-phosphate. Also has adenosine deaminase activity. This Rickettsia prowazekii (strain Madrid E) protein is Purine nucleoside phosphorylase RP494.